The sequence spans 455 residues: tRNA-2-methylthio-N(6)-dimethylallyladenosine synthase (455 aa).

An MTTase N-terminal domain is found at 10–130 (RKVFIKTYGC…LPDALKRVRR (121 aa)). Cysteine 19, cysteine 55, cysteine 93, cysteine 171, cysteine 175, and cysteine 178 together coordinate [4Fe-4S] cluster. Residues 157 to 389 (RSRGVTAFLT…QALLLRQQKE (233 aa)) enclose the Radical SAM core domain. A TRAM domain is found at 392–454 (ESLVGKTMDV…PNSLFAEVAG (63 aa)).

Belongs to the methylthiotransferase family. MiaB subfamily. As to quaternary structure, monomer. [4Fe-4S] cluster serves as cofactor.

Its subcellular location is the cytoplasm. The catalysed reaction is N(6)-dimethylallyladenosine(37) in tRNA + (sulfur carrier)-SH + AH2 + 2 S-adenosyl-L-methionine = 2-methylsulfanyl-N(6)-dimethylallyladenosine(37) in tRNA + (sulfur carrier)-H + 5'-deoxyadenosine + L-methionine + A + S-adenosyl-L-homocysteine + 2 H(+). Its function is as follows. Catalyzes the methylthiolation of N6-(dimethylallyl)adenosine (i(6)A), leading to the formation of 2-methylthio-N6-(dimethylallyl)adenosine (ms(2)i(6)A) at position 37 in tRNAs that read codons beginning with uridine. This chain is tRNA-2-methylthio-N(6)-dimethylallyladenosine synthase, found in Agrobacterium fabrum (strain C58 / ATCC 33970) (Agrobacterium tumefaciens (strain C58)).